Consider the following 540-residue polypeptide: 2,3-bisphosphoglycerate-independent phosphoglycerate mutase (540 aa).

Mn(2+) contacts are provided by Asp24 and Ser74. Catalysis depends on Ser74, which acts as the Phosphoserine intermediate. Residues His135, Arg165 to Asp166, Arg197, Arg203, Arg268 to Arg271, and Lys341 each bind substrate. Residues Asp408, His412, Asp449, His450, and His467 each contribute to the Mn(2+) site.

This sequence belongs to the BPG-independent phosphoglycerate mutase family. In terms of assembly, monomer. It depends on Mn(2+) as a cofactor.

It carries out the reaction (2R)-2-phosphoglycerate = (2R)-3-phosphoglycerate. It functions in the pathway carbohydrate degradation; glycolysis; pyruvate from D-glyceraldehyde 3-phosphate: step 3/5. Functionally, catalyzes the interconversion of 2-phosphoglycerate and 3-phosphoglycerate. The sequence is that of 2,3-bisphosphoglycerate-independent phosphoglycerate mutase from Prochlorococcus marinus (strain MIT 9303).